The following is a 413-amino-acid chain: Protein arginine N-methyltransferase 2 (413 aa).

Disordered regions lie at residues 65-85 (DDEEPNGVQTNGEQGDEQKSV) and 148-178 (ELEDDDEEEEEGQEEQTGTEEVEVEGESAPQ). A compositionally biased stretch (acidic residues) spans 148–173 (ELEDDDEEEEEGQEEQTGTEEVEVEG). The region spanning 192–413 (TGPDVTNSRY…YRLPLCKYMD (222 aa)) is the RMT2 domain. S-adenosyl-L-methionine contacts are provided by residues Y201, M230, 250-255 (HGMGIV), 271-273 (EAH), 298-299 (WQ), and D318.

The protein belongs to the class I-like SAM-binding methyltransferase superfamily. RMT2 methyltransferase family. In terms of assembly, monomer.

The protein localises to the cytoplasm. The protein resides in the nucleus. Its function is as follows. S-adenosyl-L-methionine-dependent protein-arginine N-methyltransferase that methylates the delta-nitrogen atom of arginine residues to form N5-methylarginine (type IV) in target proteins. Monomethylates ribosomal protein L12. This chain is Protein arginine N-methyltransferase 2, found in Aspergillus oryzae (strain ATCC 42149 / RIB 40) (Yellow koji mold).